Here is a 529-residue protein sequence, read N- to C-terminus: 2-(3-amino-3-carboxypropyl)histidine synthase subunit 2-2 (529 aa).

[4Fe-4S] cluster is bound by residues Cys130, Cys151, and Cys366.

This sequence belongs to the DPH1/DPH2 family. DPH2 subfamily. As to quaternary structure, component of the 2-(3-amino-3-carboxypropyl)histidine synthase complex composed of DPH1, DPH2, DPH3 and a NADH-dependent reductase, predominantly CBR1. [4Fe-4S] cluster is required as a cofactor.

The protein localises to the cytoplasm. The protein operates within protein modification; peptidyl-diphthamide biosynthesis. In terms of biological role, required for the first step of diphthamide biosynthesis, a post-translational modification of histidine which occurs in elongation factor 2. DPH1 and DPH2 transfer a 3-amino-3-carboxypropyl (ACP) group from S-adenosyl-L-methionine (SAM) to a histidine residue, the reaction is assisted by a reduction system comprising DPH3 and a NADH-dependent reductase, predominantly CBR1. Facilitates the reduction of the catalytic iron-sulfur cluster found in the DPH1 subunit. The sequence is that of 2-(3-amino-3-carboxypropyl)histidine synthase subunit 2-2 from Candida albicans (strain SC5314 / ATCC MYA-2876) (Yeast).